Reading from the N-terminus, the 458-residue chain is Ammonium transporter Rh type B (458 aa).

Topologically, residues 1–13 (MAGSSRRAGGRRL) are cytoplasmic. A helical membrane pass occupies residues 14–34 (QLPLLCLLLQGATAILFAVFV). At 35 to 61 (RYNHETDAALWHWGNHSNPDNEFYFRY) the chain is on the extracellular side. A glycan (N-linked (GlcNAc...) asparagine) is linked at N49. A helical transmembrane segment spans residues 62–82 (PSFQDVHTMIFVGFGFLMAFL). Over 83–86 (QRYG) the chain is Cytoplasmic. A helical membrane pass occupies residues 87-107 (FSSVGFTFLLAAFALQWSTLV). The Extracellular segment spans residues 108–124 (QGFLHTFHGGHIHIGVE). A helical transmembrane segment spans residues 125 to 145 (SMINADFCAGAVLISFGAILG). Residues 146-149 (KTGP) are Cytoplasmic-facing. The chain crosses the membrane as a helical span at residues 150-170 (AQLLLMALLEVVLFGLNEFVL). The Extracellular segment spans residues 171–178 (LSLLGVKD). The helical transmembrane segment at 179-201 (AGGSMTIHTFGAYFGLVLSRVLY) threads the bilayer. The Cytoplasmic segment spans residues 202 to 219 (RPQLEKSKHRQSSVYHSD). The chain crosses the membrane as a helical span at residues 220-240 (LFAMIGTIFLWIFWPSFNSAP). Residues 241-251 (TPLGDGQHRTA) are Extracellular-facing. A helical membrane pass occupies residues 252–272 (LNTYYSLTASTLSTFALSALV). Residues 273–282 (GRDGRLDMVH) lie on the Cytoplasmic side of the membrane. The helical transmembrane segment at 283-303 (VQNAALAGGVVVGTSAEMMLT) threads the bilayer. A topological domain (extracellular) is located at residue P304. Residues 305 to 325 (FGALAAGFLAGTVSTLGFKFF) traverse the membrane as a helical segment. Residues 326–346 (TPILESKFKIQDTCGVHNLHG) lie on the Cytoplasmic side of the membrane. The chain crosses the membrane as a helical span at residues 347–367 (MPGVLGALLGVLVAGLATHDS). Residues 368 to 393 (YGEGLESVFPLIAEGQRSSTSQALHQ) lie on the Extracellular side of the membrane. The chain crosses the membrane as a helical span at residues 394–414 (LFGLFVTLIFASVGGGLGGLL). Residues 415-458 (LRLPFLDSPPDSQCYEDQIYWEVPEEHADLAQGSLRPEEPDTQA) are Cytoplasmic-facing. The interval 416 to 424 (RLPFLDSPP) is interaction with ANK3. The short motif at 429–432 (YEDQ) is the Basolateral sorting signal element.

The protein belongs to the ammonium transporter (TC 2.A.49) family. Rh subfamily. Interacts (via C-terminus) with ANK2 and ANK3; required for targeting to the basolateral membrane. N-glycosylated.

Its subcellular location is the cell membrane. The protein resides in the basolateral cell membrane. It carries out the reaction NH4(+)(in) = NH4(+)(out). The catalysed reaction is methylamine(out) = methylamine(in). The enzyme catalyses CO2(out) = CO2(in). In terms of biological role, ammonium transporter involved in the maintenance of acid-base homeostasis. Transports ammonium and its related derivative methylammonium across the basolateral plasma membrane of epithelial cells likely contributing to renal transepithelial ammonia transport and ammonia metabolism. May transport either NH4(+) or NH3 ammonia species predominantly mediating an electrogenic NH4(+) transport. May act as a CO2 channel providing for renal acid secretion. The protein is Ammonium transporter Rh type B (RHBG) of Sus scrofa (Pig).